The following is a 75-amino-acid chain: U6-lycotoxin-Ls1b (75 aa).

A signal peptide spans 1–21 (MKLLLFTALVLVVISLIEVEA). The propeptide occupies 22–25 (ENER).

Belongs to the neurotoxin 19 (CSTX) family. 06 (U6-Lctx) subfamily. Post-translationally, contains 4 disulfide bonds. Expressed by the venom gland.

The protein resides in the secreted. This Lycosa singoriensis (Wolf spider) protein is U6-lycotoxin-Ls1b.